The chain runs to 451 residues: Chromosomal replication initiator protein DnaA (451 aa).

The domain I, interacts with DnaA modulators stretch occupies residues 1 to 71 (MSEKEIWDKV…QAIIYDVIGY (71 aa)). The interval 71-112 (YEVKPHFISEDELASYNNVNTQEVQEPQVQHSSIDDKTWGKE) is domain II. Positions 113–329 (QFNMHNTFDT…GALTRLLAYS (217 aa)) are domain III, AAA+ region. ATP-binding residues include glycine 157, glycine 159, lysine 160, and threonine 161. The segment at 330 to 451 (KLQGKPITTE…ENLEKEIRNQ (122 aa)) is domain IV, binds dsDNA.

This sequence belongs to the DnaA family. Oligomerizes as a right-handed, spiral filament on DNA at oriC.

Its subcellular location is the cytoplasm. Its function is as follows. Plays an essential role in the initiation and regulation of chromosomal replication. ATP-DnaA binds to the origin of replication (oriC) to initiate formation of the DNA replication initiation complex once per cell cycle. Binds the DnaA box (a 9 base pair repeat at the origin) and separates the double-stranded (ds)DNA. Forms a right-handed helical filament on oriC DNA; dsDNA binds to the exterior of the filament while single-stranded (ss)DNA is stabiized in the filament's interior. The ATP-DnaA-oriC complex binds and stabilizes one strand of the AT-rich DNA unwinding element (DUE), permitting loading of DNA polymerase. After initiation quickly degrades to an ADP-DnaA complex that is not apt for DNA replication. Binds acidic phospholipids. The polypeptide is Chromosomal replication initiator protein DnaA (Staphylococcus epidermidis (strain ATCC 35984 / DSM 28319 / BCRC 17069 / CCUG 31568 / BM 3577 / RP62A)).